Here is a 700-residue protein sequence, read N- to C-terminus: Protein claret segregational (700 aa).

A phosphoserine mark is found at S94 and S96. Residues 141–185 (APSSITATAVKRPPVTRPAPRAAGGAAAKKPAGTGAAASSGAAAA) form a disordered region. Positions 149–185 (AVKRPPVTRPAPRAAGGAAAKKPAGTGAAASSGAAAA) are enriched in low complexity. The stretch at 196–346 (KARFHDLLEK…ELHNTVMDLR (151 aa)) forms a coiled coil. The Kinesin motor domain occupies 348–670 (NIRVFCRIRP…LRFAASVNSC (323 aa)). An ATP-binding site is contributed by 434 to 441 (GQTGSGKT). The required for minus-end directionality stretch occupies residues 664–668 (AASVN). A disordered region spans residues 681–700 (LNNSVANSSTQSNNSGSFDK).

This sequence belongs to the TRAFAC class myosin-kinesin ATPase superfamily. Kinesin family. NCD subfamily.

Its subcellular location is the cytoplasm. The protein localises to the cytoskeleton. It carries out the reaction ATP + H2O = ADP + phosphate + H(+). In terms of biological role, minus-end-directed microtubule-based motor protein. Has ATPase activity. Required for normal chromosomal segregation in meiosis in females, and in early mitotic divisions of the embryo. This chain is Protein claret segregational (ncd), found in Drosophila melanogaster (Fruit fly).